The sequence spans 273 residues: 4-hydroxy-tetrahydrodipicolinate reductase (273 aa).

NAD(+)-binding positions include 12 to 17 (GAGGRM) and Glu-38. Arg-39 is a binding site for NADP(+). NAD(+) is bound by residues 102–104 (GTT) and 126–129 (AANF). Residue His-159 is the Proton donor/acceptor of the active site. His-160 is a (S)-2,3,4,5-tetrahydrodipicolinate binding site. Lys-163 functions as the Proton donor in the catalytic mechanism. (S)-2,3,4,5-tetrahydrodipicolinate is bound at residue 169–170 (GT).

The protein belongs to the DapB family. Homotetramer.

The protein localises to the cytoplasm. The catalysed reaction is (S)-2,3,4,5-tetrahydrodipicolinate + NAD(+) + H2O = (2S,4S)-4-hydroxy-2,3,4,5-tetrahydrodipicolinate + NADH + H(+). It catalyses the reaction (S)-2,3,4,5-tetrahydrodipicolinate + NADP(+) + H2O = (2S,4S)-4-hydroxy-2,3,4,5-tetrahydrodipicolinate + NADPH + H(+). It functions in the pathway amino-acid biosynthesis; L-lysine biosynthesis via DAP pathway; (S)-tetrahydrodipicolinate from L-aspartate: step 4/4. In terms of biological role, catalyzes the conversion of 4-hydroxy-tetrahydrodipicolinate (HTPA) to tetrahydrodipicolinate. This Yersinia pseudotuberculosis serotype O:1b (strain IP 31758) protein is 4-hydroxy-tetrahydrodipicolinate reductase.